We begin with the raw amino-acid sequence, 218 residues long: Phosphatidylserine decarboxylase proenzyme (218 aa).

Ser188 serves as the catalytic Schiff-base intermediate with substrate; via pyruvic acid. A Pyruvic acid (Ser); by autocatalysis modification is found at Ser188.

This sequence belongs to the phosphatidylserine decarboxylase family. PSD-A subfamily. As to quaternary structure, heterodimer of a large membrane-associated beta subunit and a small pyruvoyl-containing alpha subunit. Requires pyruvate as cofactor. In terms of processing, is synthesized initially as an inactive proenzyme. Formation of the active enzyme involves a self-maturation process in which the active site pyruvoyl group is generated from an internal serine residue via an autocatalytic post-translational modification. Two non-identical subunits are generated from the proenzyme in this reaction, and the pyruvate is formed at the N-terminus of the alpha chain, which is derived from the carboxyl end of the proenzyme. The post-translation cleavage follows an unusual pathway, termed non-hydrolytic serinolysis, in which the side chain hydroxyl group of the serine supplies its oxygen atom to form the C-terminus of the beta chain, while the remainder of the serine residue undergoes an oxidative deamination to produce ammonia and the pyruvoyl prosthetic group on the alpha chain.

It localises to the cell membrane. The catalysed reaction is a 1,2-diacyl-sn-glycero-3-phospho-L-serine + H(+) = a 1,2-diacyl-sn-glycero-3-phosphoethanolamine + CO2. It participates in phospholipid metabolism; phosphatidylethanolamine biosynthesis; phosphatidylethanolamine from CDP-diacylglycerol: step 2/2. Functionally, catalyzes the formation of phosphatidylethanolamine (PtdEtn) from phosphatidylserine (PtdSer). This is Phosphatidylserine decarboxylase proenzyme from Streptomyces coelicolor (strain ATCC BAA-471 / A3(2) / M145).